A 591-amino-acid chain; its full sequence is Probable cyclin-dependent kinase 9 (591 aa).

The tract at residues 1 to 385 (MKRSSSVSVE…FEQTANGKRQ (385 aa)) is interaction with pch1. The region spanning 36-339 (YHLMEKLGEG…ASMALEHEYF (304 aa)) is the Protein kinase domain. Residues 42–50 (LGEGTFGEV) and K65 each bind ATP. D166 acts as the Proton acceptor in catalysis. Y211 is modified (phosphotyrosine). T212 is modified (phosphothreonine). 2 disordered regions span residues 341 to 534 (TPPY…KTQH) and 549 to 591 (ARQS…DTPK). Over residues 358–372 (HEYDKRRKREQRDAN) the composition is skewed to basic and acidic residues. Composition is skewed to polar residues over residues 404-415 (NYNSQPQYQRGS) and 428-465 (NVNY…TSNH). Positions 442 to 523 (LTSDLPQKNS…NSKVQTTSRA (82 aa)) are binds to pct1. Positions 466-482 (SHADGQRYYRPEQDRSQ) are enriched in basic and acidic residues. Residues 491–502 (GRQGRQSSQSQQ) are compositionally biased toward low complexity. Residues 503–534 (PAWNVSSRYQNNSKVQTTSRASENADTNKTQH) show a composition bias toward polar residues. Phosphothreonine is present on T565. Residue S577 is modified to Phosphoserine.

Belongs to the protein kinase superfamily. CMGC Ser/Thr protein kinase family. CDC2/CDKX subfamily. In terms of assembly, interacts with pch1 cyclin via its N-terminal domain. Via its C-terminal domain, interacts with RNA triphosphatase pct1 which is involved in mRNA capping. Also interacts with pcm1.

The protein resides in the nucleus. The enzyme catalyses L-seryl-[protein] + ATP = O-phospho-L-seryl-[protein] + ADP + H(+). It carries out the reaction L-threonyl-[protein] + ATP = O-phospho-L-threonyl-[protein] + ADP + H(+). It catalyses the reaction [DNA-directed RNA polymerase] + ATP = phospho-[DNA-directed RNA polymerase] + ADP + H(+). Its activity is regulated as follows. May be activated by autophosphorylation or phosphorylation by a separate activating kinase. Functionally, component of the positive transcription elongation factor b (P-TEFb) which consists of cdk9 and pch1, and which phosphorylates the C-terminal domain (CTD) of RNA polymerase II and spt5. This Schizosaccharomyces pombe (strain 972 / ATCC 24843) (Fission yeast) protein is Probable cyclin-dependent kinase 9 (cdk9).